An 83-amino-acid chain; its full sequence is Putative cytochrome b5 B11H24.095 (83 aa).

Residues 2–78 (SQTFTKSQVA…GTKLKVGTLA (77 aa)) enclose the Cytochrome b5 heme-binding domain. 2 residues coordinate heme: H37 and H60.

The protein belongs to the cytochrome b5 family.

This is Putative cytochrome b5 B11H24.095 from Neurospora crassa (strain ATCC 24698 / 74-OR23-1A / CBS 708.71 / DSM 1257 / FGSC 987).